A 637-amino-acid polypeptide reads, in one-letter code: Glutamate--cysteine ligase catalytic subunit (637 aa).

At methionine 1 the chain carries N-acetylmethionine. Residues serine 5 and serine 8 each carry the phosphoserine modification.

This sequence belongs to the glutamate--cysteine ligase type 3 family. In terms of assembly, heterodimer of a catalytic heavy chain and a regulatory light chain.

The catalysed reaction is L-cysteine + L-glutamate + ATP = gamma-L-glutamyl-L-cysteine + ADP + phosphate + H(+). It carries out the reaction (2S)-2-aminobutanoate + L-glutamate + ATP = gamma-L-glutamyl-(2S)-2-aminobutanoate + ADP + phosphate + H(+). The protein operates within sulfur metabolism; glutathione biosynthesis; glutathione from L-cysteine and L-glutamate: step 1/2. With respect to regulation, feedback inhibition by glutathione. Functionally, catalyzes the ATP-dependent ligation of L-glutamate and L-cysteine and participates in the first and rate-limiting step in glutathione biosynthesis. The protein is Glutamate--cysteine ligase catalytic subunit of Homo sapiens (Human).